Here is a 365-residue protein sequence, read N- to C-terminus: Eukaryotic translation initiation factor 3 subunit H (365 aa).

The 150-residue stretch at 11–160 (VKVEALVVMK…LRAFRLSPKF (150 aa)) folds into the MPN domain.

The protein belongs to the eIF-3 subunit H family. As to quaternary structure, component of the eukaryotic translation initiation factor 3 (eIF-3) complex.

It localises to the cytoplasm. Component of the eukaryotic translation initiation factor 3 (eIF-3) complex, which is involved in protein synthesis of a specialized repertoire of mRNAs and, together with other initiation factors, stimulates binding of mRNA and methionyl-tRNAi to the 40S ribosome. The eIF-3 complex specifically targets and initiates translation of a subset of mRNAs involved in cell proliferation. This is Eukaryotic translation initiation factor 3 subunit H from Aspergillus clavatus (strain ATCC 1007 / CBS 513.65 / DSM 816 / NCTC 3887 / NRRL 1 / QM 1276 / 107).